We begin with the raw amino-acid sequence, 21 residues long: Preblooming protein 2 (21 aa).

Possible mediator for cell division in the blooming process. The protein is Preblooming protein 2 of Prorocentrum triestinum (Red tide alga).